The following is a 377-amino-acid chain: Spore coat protein SA (377 aa).

It belongs to the glycosyltransferase group 1 family. Glycosyltransferase 4 subfamily.

The polypeptide is Spore coat protein SA (cotSA) (Bacillus subtilis (strain 168)).